The chain runs to 55 residues: AFVINDSCVSCGACAGECPVSAITQGDTQFVIDADTCIDCGNCANVCPVGAPNQE.

2 4Fe-4S ferredoxin-type domains span residues 2 to 27 (FVINDSCVSCGACAGECPVSAITQGD) and 28 to 55 (TQFVIDADTCIDCGNCANVCPVGAPNQE). Residues cysteine 8, cysteine 11, cysteine 14, cysteine 18, cysteine 37, cysteine 40, cysteine 43, and cysteine 47 each contribute to the [4Fe-4S] cluster site.

It depends on [4Fe-4S] cluster as a cofactor.

Functionally, ferredoxins are iron-sulfur proteins that transfer electrons in a wide variety of metabolic reactions. This Clostridium butyricum protein is Ferredoxin.